Here is a 221-residue protein sequence, read N- to C-terminus: Pleckstrin homology domain-containing family B member 2 (221 aa).

In terms of domain architecture, PH spans 2 to 109; sequence AFVKSGWLLR…WKFTLQDSRT (108 aa). Residue K20 coordinates a 1,2-diacyl-sn-glycero-3-phospho-L-serine.

As to expression, highly expressed in brain, retina, heart and kidney. Detected at lower levels in lung, muscle and nerve.

It localises to the recycling endosome membrane. Involved in retrograde transport of recycling endosomes. The sequence is that of Pleckstrin homology domain-containing family B member 2 (Plekhb2) from Mus musculus (Mouse).